A 357-amino-acid polypeptide reads, in one-letter code: Protein RecA (357 aa).

67-74 (GPESSGKT) is an ATP binding site. Positions 332-357 (PSAMSSSSSDDENSEGNVDFETGEVF) are disordered.

Belongs to the RecA family.

The protein localises to the cytoplasm. Can catalyze the hydrolysis of ATP in the presence of single-stranded DNA, the ATP-dependent uptake of single-stranded DNA by duplex DNA, and the ATP-dependent hybridization of homologous single-stranded DNAs. It interacts with LexA causing its activation and leading to its autocatalytic cleavage. In Shewanella sp. (strain ANA-3), this protein is Protein RecA.